The chain runs to 208 residues: Small ribosomal subunit protein uS2 (208 aa).

It belongs to the universal ribosomal protein uS2 family.

The sequence is that of Small ribosomal subunit protein uS2 from Cenarchaeum symbiosum (strain A).